Here is a 574-residue protein sequence, read N- to C-terminus: FAD-linked oxidoreductase penH (574 aa).

The first 25 residues, 1–25 (MLPRALTLSALLALLLAIYLALAPA), serve as a signal peptide directing secretion. N48, N107, N193, N368, and N385 each carry an N-linked (GlcNAc...) asparagine glycan. The 185-residue stretch at 121–305 (HQGRIPLYAA…VRVTMRTYPD (185 aa)) folds into the FAD-binding PCMH-type domain.

It belongs to the oxygen-dependent FAD-linked oxidoreductase family. It depends on FAD as a cofactor.

It catalyses the reaction peniprequinolone + A = yaequinolone E + AH2. Its pathway is secondary metabolite biosynthesis. It functions in the pathway alkaloid biosynthesis. The protein operates within mycotoxin biosynthesis. Its function is as follows. FAD-linked oxidoreductase; part of the gene cluster that mediates the biosynthesis of penigequinolones, potent insecticidal alkaloids that contain a highly modified 10-carbon prenyl group. The first stage is catalyzed by the nonribosomal peptide synthetase penN that condenses anthranilic acid and O-methyl-L-tyrosine to produce 4'-methoxycyclopeptin. 4'-methoxycyclopeptin is then converted to 4'-methoxydehydrocyclopeptin by the ketoglutarate-dependent dioxygenase penM through dehydrogenation to form a double bond between C-alpha and C-beta of the O-methyltyrosine side chain. PenM also converts its first product methoxydehydrocyclopeptin to 4'-methoxycyclopenin. The following conversion of 4'methoxycyclopenin into 4'-methoxyviridicatin is catalyzed by the cyclopenase penL. 4'-methoxyviridicatin is the precursor of quinolone natural products, and is further converted to quinolinone B. The prenyltransferase penI then catalyzes the canonical Friedel-Crafts alkylation of quinolinone B with dimethylallyl cation to yield dimethylallyl quinolone, which is subjected to FAD-dependent dehydrogenation by the FAD-linked oxidoreductase penH to yield conjugated aryl diene. The delta(3') double bond then serves as the site of the second alkylation with DMAPP catalyzed by the prenyltransferase penG to yield a carbenium ion intermediate, which can be attacked by H(2)O to yield a styrenyl quinolone containing a C3'-hydroxyprenyl chain, or undergo cyclization to yield yaequinolones J1 and J2. The conversion of the styrenyl quinolone into the tetrahydrofuran-containing yaequinolone C is performed by the FAD-dependent monooxygenase penE and involves epoxidation of the terminal C7'-C8' olefin, followed by epoxide ring opening initiated by the C3' hydroxyl group. The predicted cysteine hydrolase penJ acts as an epoxide hydrolase that enhances the rate of the 5-exo-tet cyclization step, increasing the yield of yaequinolone C. PenF catalyzes the cationic rearrangement of the epoxide formed by penE (before ring opening to produce yaequinolone C) into yaequinolone D. Finally, the short-chain dehydrogenase/reductase (SDR)-like reductase penD, catalyzes both the dehydration of yaequinolone D and the reduction of the resulting oxonium to yield penigequinolone. The chain is FAD-linked oxidoreductase penH from Penicillium thymicola.